The sequence spans 350 residues: MNNEKMKALQAAITQIEKQFGKGSVMKLGEEHVLNVEAISTGSLSLDIALGIGGIPRGRIIEIFGPESSGKTTVALHIIAEAQKSGGTAAFIDAEHALDPVYAKALGVDIDNLIVSQPDTGEQALEICEALVRSGAIDVIVVDSVAALVPKAEIEGEMGDSHVGLQARLMSQALRKLTGSINKSKCATIFINQLREKVGIMFGNPETTPGGRALKFYSSVRLDVRKIETIKQGDEFLGSRTRVKVVKNKVAPPFKQAEFDIMYGTGISFEGNVLDVGVDNEIIQKSGSWFSYNDTRLGQGRENVKQFLRENPSILLEVENKIREKHNLKTRNTADSKVTGAKDEKSKEEK.

65 to 72 (GPESSGKT) provides a ligand contact to ATP. Residues 326-350 (HNLKTRNTADSKVTGAKDEKSKEEK) form a disordered region. Positions 340 to 350 (GAKDEKSKEEK) are enriched in basic and acidic residues.

This sequence belongs to the RecA family.

The protein localises to the cytoplasm. Functionally, can catalyze the hydrolysis of ATP in the presence of single-stranded DNA, the ATP-dependent uptake of single-stranded DNA by duplex DNA, and the ATP-dependent hybridization of homologous single-stranded DNAs. It interacts with LexA causing its activation and leading to its autocatalytic cleavage. In Clostridium novyi (strain NT), this protein is Protein RecA.